We begin with the raw amino-acid sequence, 128 residues long: Cytochrome c-type biogenesis protein CcmE (128 aa).

At 1–8 (MQKRVRNR) the chain is on the cytoplasmic side. The chain crosses the membrane as a helical; Signal-anchor for type II membrane protein span at residues 9 to 29 (LITIIICFCSACLGISIILYN). Residues 30 to 128 (LEKNIVFFLP…KHDENYRPPQ (99 aa)) are Periplasmic-facing. Histidine 120 and tyrosine 124 together coordinate heme.

Belongs to the CcmE/CycJ family.

The protein localises to the cell inner membrane. Its function is as follows. Heme chaperone required for the biogenesis of c-type cytochromes. Transiently binds heme delivered by CcmC and transfers the heme to apo-cytochromes in a process facilitated by CcmF and CcmH. This is Cytochrome c-type biogenesis protein CcmE from Rickettsia conorii (strain ATCC VR-613 / Malish 7).